Consider the following 325-residue polypeptide: Deoxyhypusine hydroxylase (325 aa).

The residue at position 2 (Ser2) is an N-acetylserine. 2 HEAT-like PBS-type repeats span residues 77–103 and 110–136; these read LKHE…VMLD and VRHE…AAKE. Residues His79, Glu80, His112, and Glu113 each coordinate Fe cation. Phosphoserine is present on Ser126. Position 187 is a phosphothreonine (Thr187). HEAT-like PBS-type repeat units lie at residues 202–231, 235–261, and 268–294; these read LFQR…FSAE, FKHE…VLGR, and VRHE…YLND. Fe cation contacts are provided by His237, Glu238, His270, and Glu271. Ser281 carries the phosphoserine modification.

The protein belongs to the deoxyhypusine hydroxylase family. Fe(2+) is required as a cofactor.

The protein resides in the cytoplasm. It is found in the nucleus. The enzyme catalyses [eIF5A protein]-deoxyhypusine + AH2 + O2 = [eIF5A protein]-hypusine + A + H2O. It functions in the pathway protein modification; eIF5A hypusination. Catalyzes the hydroxylation of the N(6)-(4-aminobutyl)-L-lysine intermediate to form hypusine, an essential post-translational modification only found in mature eIF-5A factor. The sequence is that of Deoxyhypusine hydroxylase from Saccharomyces cerevisiae (strain ATCC 204508 / S288c) (Baker's yeast).